Reading from the N-terminus, the 399-residue chain is Transcription factor UNE10 (399 aa).

2 disordered regions span residues 119–158 (QSKP…GSQR) and 173–228 (MGSH…RRDK). Positions 178–201 (NTIDDHDSVCHSRPQMEDEEEKKA) are enriched in basic and acidic residues. The bHLH domain maps to 213 to 262 (RAAAIHNQSERKRRDKINQRMKTLQKLVPNSSKTDKASMLDEVIEYLKQL).

In terms of assembly, homodimer. Associates to PTAC12/HMR/PAP5 which acts as a transcriptional coactivator. Interacts with the Pfr form of phyB but barely with that of phyA. Binds to COP1. In terms of processing, ubiquitinated and subsequently targeted to protein degradation by COP1 in the dark, but not in far-red light. Mainly expressed in stems, leaves, seedlings, fruits and flowers, and, to a lower extent, in roots.

It localises to the nucleus. With respect to regulation, stabilized by phyA but destabilized by phyB. Accumulates in the dark but not in far-red light upon MG132 treatment, a 26S proteasome inhibitor (at protein level). Functionally, transcription factor binding to G-box elements (5'-CACGTG-3') in target genes promoters, particularly in far-red light but barely in the dark. Required during the fertilization of ovules by pollen. Repressor of phytochrome A-mediated far-red light responses including seed germination, suppression of hypocotyl elongation, and randomization of hypocotyl growth orientation. Does not inhibit phyB-induced red light responses. This Arabidopsis thaliana (Mouse-ear cress) protein is Transcription factor UNE10.